A 298-amino-acid chain; its full sequence is Specificity protein transcription factor 1 (298 aa).

The span at 206-218 (VSSGSESVSARGT) shows a compositional bias: low complexity. The segment at 206–233 (VSSGSESVSARGTSGSGGTGKYPSSRTA) is disordered. The C2H2-type zinc-finger motif lies at 260-284 (HNCHIAGCGKVYNKSSHLKAHLRWH).

It belongs to the Sp1 C2H2-type zinc-finger protein family. In terms of tissue distribution, expressed in ASJ sensory neurons, pharyngeal cells, rectal cells, intestine, seam cells, and vulval cells.

In terms of biological role, probable transcription factor which modulates gene expression, thereby acting as an ASJ sensory neuron terminal selector gene. In Caenorhabditis elegans, this protein is Specificity protein transcription factor 1.